The sequence spans 426 residues: Gamma-glutamyl phosphate reductase (426 aa).

The protein belongs to the gamma-glutamyl phosphate reductase family.

The protein resides in the cytoplasm. It catalyses the reaction L-glutamate 5-semialdehyde + phosphate + NADP(+) = L-glutamyl 5-phosphate + NADPH + H(+). Its pathway is amino-acid biosynthesis; L-proline biosynthesis; L-glutamate 5-semialdehyde from L-glutamate: step 2/2. Functionally, catalyzes the NADPH-dependent reduction of L-glutamate 5-phosphate into L-glutamate 5-semialdehyde and phosphate. The product spontaneously undergoes cyclization to form 1-pyrroline-5-carboxylate. The chain is Gamma-glutamyl phosphate reductase from Ralstonia pickettii (strain 12J).